A 350-amino-acid chain; its full sequence is S-adenosylmethionine:tRNA ribosyltransferase-isomerase (350 aa).

It belongs to the QueA family. As to quaternary structure, monomer.

It is found in the cytoplasm. It carries out the reaction 7-aminomethyl-7-carbaguanosine(34) in tRNA + S-adenosyl-L-methionine = epoxyqueuosine(34) in tRNA + adenine + L-methionine + 2 H(+). It functions in the pathway tRNA modification; tRNA-queuosine biosynthesis. In terms of biological role, transfers and isomerizes the ribose moiety from AdoMet to the 7-aminomethyl group of 7-deazaguanine (preQ1-tRNA) to give epoxyqueuosine (oQ-tRNA). The sequence is that of S-adenosylmethionine:tRNA ribosyltransferase-isomerase from Bacillus cereus (strain ZK / E33L).